Reading from the N-terminus, the 572-residue chain is Urease subunit alpha (572 aa).

Residues 136–572 enclose the Urease domain; it reads GGIDTHIHFI…VPLGQRYFLF (437 aa). Residues His141, His143, and Lys224 each contribute to the Ni(2+) site. An N6-carboxylysine modification is found at Lys224. His226 is a substrate binding site. Residues His253 and His279 each contribute to the Ni(2+) site. Catalysis depends on His327, which acts as the Proton donor. Position 367 (Asp367) interacts with Ni(2+).

This sequence belongs to the metallo-dependent hydrolases superfamily. Urease alpha subunit family. Heterotrimer of UreA (gamma), UreB (beta) and UreC (alpha) subunits. Three heterotrimers associate to form the active enzyme. Requires Ni cation as cofactor. In terms of processing, carboxylation allows a single lysine to coordinate two nickel ions.

The protein localises to the cytoplasm. It catalyses the reaction urea + 2 H2O + H(+) = hydrogencarbonate + 2 NH4(+). Its pathway is nitrogen metabolism; urea degradation; CO(2) and NH(3) from urea (urease route): step 1/1. The protein is Urease subunit alpha of Haemophilus influenzae (strain ATCC 51907 / DSM 11121 / KW20 / Rd).